A 639-amino-acid chain; its full sequence is 3-hydroxybenzoate 4-monooxygenase (639 aa).

FAD-binding positions include 34–64 (DVLI…IVEQ), glutamine 73, valine 166, asparagine 212, 269–271 (RFY), tyrosine 317, aspartate 349, and serine 365.

The protein belongs to the PheA/TfdB FAD monooxygenase family. As to quaternary structure, homodimer. FAD serves as cofactor.

It catalyses the reaction 3-hydroxybenzoate + NADPH + O2 + H(+) = 3,4-dihydroxybenzoate + NADP(+) + H2O. Functionally, converts 3-hydroxybenzoate (m-hydroxybenzoate), and to a lesser extent p-hydroxybenzoate, to 3,4-dihydroxybenzoate (protocatechuate). Also acts on a number of analogs of 3-hydroxybenzoate substituted in the 2, 4, 5 and 6 positions. This is 3-hydroxybenzoate 4-monooxygenase (mobA) from Comamonas testosteroni (Pseudomonas testosteroni).